The sequence spans 184 residues: Peptide deformylase (184 aa).

Residues Cys96 and His138 each coordinate Fe cation. Glu139 is an active-site residue. Residue His142 participates in Fe cation binding.

The protein belongs to the polypeptide deformylase family. Fe(2+) is required as a cofactor.

The catalysed reaction is N-terminal N-formyl-L-methionyl-[peptide] + H2O = N-terminal L-methionyl-[peptide] + formate. Removes the formyl group from the N-terminal Met of newly synthesized proteins. Requires at least a dipeptide for an efficient rate of reaction. N-terminal L-methionine is a prerequisite for activity but the enzyme has broad specificity at other positions. The protein is Peptide deformylase of Cytophaga hutchinsonii (strain ATCC 33406 / DSM 1761 / CIP 103989 / NBRC 15051 / NCIMB 9469 / D465).